Consider the following 248-residue polypeptide: uncharacterized protein (248 aa).

Residues 33–57 are a coiled coil; it reads EWQLSEGQKRCEEINRQNRQLRVEK.

This is an uncharacterized protein from Escherichia coli (strain K12).